The primary structure comprises 381 residues: E3 ubiquitin-protein ligase KCMF1 (381 aa).

S2 carries the N-acetylserine modification. S2 carries the post-translational modification Phosphoserine. The segment at 4–60 (HEGVSCDACLKGNFRGRRYKCLICYDYDLCASCYESGATTTRHTTDHPMQCILTRVD) adopts a ZZ-type zinc-finger fold. The Zn(2+) site is built by C9, C12, C24, C27, C33, C36, H46, and H50. A C2H2-type zinc finger spans residues 78–101 (FTCPYCGKMGYTETSLQEHVTSEH). The disordered stretch occupies residues 154 to 194 (MFHPGRGLGGPRARRSNMHFTSSSTGGLSSSQSSYSPSSRE). S169, S189, and S212 each carry phosphoserine. A compositionally biased stretch (low complexity) spans 175–192 (SSSTGGLSSSQSSYSPSS). Residues 224-259 (ASQLQQLQMQLQLERQHAQAARQQLETARNASRRTN) adopt a coiled-coil conformation. Residues S335 and S336 each carry the phosphoserine modification.

It belongs to the KCMF1 family. In terms of assembly, component of the SIFI complex, composed of KCMF1, UBR4 and calmodulin (CALM1, CALM2 or CALM3). Testis, liver, kidney, heart and skeletal muscle.

Its subcellular location is the cytoplasm. The protein localises to the late endosome. The protein resides in the lysosome. The catalysed reaction is S-ubiquitinyl-[E2 ubiquitin-conjugating enzyme]-L-cysteine + [acceptor protein]-L-lysine = [E2 ubiquitin-conjugating enzyme]-L-cysteine + N(6)-ubiquitinyl-[acceptor protein]-L-lysine.. It functions in the pathway protein modification; protein ubiquitination. E3 ubiquitin-protein ligase which accepts ubiquitin from an E2 ubiquitin-conjugating enzyme and then transfers it to targeted substrates, promoting their degradation by the proteasome. Together with UBR4, component of the N-end rule pathway: ubiquitinates proteins bearing specific N-terminal residues that are destabilizing according to the N-end rule, leading to their degradation. Does not ubiquitinate proteins that are acetylated at the N-terminus. Together with UBR4, part of a protein quality control pathway that catalyzes ubiquitination and degradation of proteins that have been oxidized in response to reactive oxygen species (ROS): recognizes proteins with an Arg-CysO3(H) degron at the N-terminus, and mediates assembly of heterotypic 'Lys-63'-/'Lys-27'-linked branched ubiquitin chains on oxidized proteins, leading to their degradation by autophagy. Catalytic component of the SIFI complex, a multiprotein complex required to inhibit the mitochondrial stress response after a specific stress event has been resolved: ubiquitinates and degrades (1) components of the HRI-mediated signaling of the integrated stress response, such as DELE1 and EIF2AK1/HRI, as well as (2) unimported mitochondrial precursors. Within the SIFI complex, UBR4 initiates ubiquitin chain that are further elongated or branched by KCMF1. In Mus musculus (Mouse), this protein is E3 ubiquitin-protein ligase KCMF1.